We begin with the raw amino-acid sequence, 182 residues long: Adenylate kinase (182 aa).

ATP is bound at residue glycine 12–threonine 17. The tract at residues serine 32–valine 61 is NMP. Residues threonine 33, arginine 38, glutamate 59–valine 61, glycine 85–arginine 88, and glutamine 92 each bind AMP. The LID stretch occupies residues leucine 126–aspartate 132. An ATP-binding site is contributed by arginine 127. Arginine 129 and arginine 140 together coordinate AMP. Arginine 168 contacts ATP.

This sequence belongs to the adenylate kinase family. As to quaternary structure, monomer.

It is found in the cytoplasm. The catalysed reaction is AMP + ATP = 2 ADP. Its pathway is purine metabolism; AMP biosynthesis via salvage pathway; AMP from ADP: step 1/1. Functionally, catalyzes the reversible transfer of the terminal phosphate group between ATP and AMP. Plays an important role in cellular energy homeostasis and in adenine nucleotide metabolism. This chain is Adenylate kinase, found in Prochlorococcus marinus (strain AS9601).